A 124-amino-acid polypeptide reads, in one-letter code: Small ribosomal subunit protein uS12 (124 aa).

D89 is subject to 3-methylthioaspartic acid. The interval 105 to 124 is disordered; the sequence is QGVKNRKQARSKYGAKMEKK.

It belongs to the universal ribosomal protein uS12 family. As to quaternary structure, part of the 30S ribosomal subunit. Contacts proteins S8 and S17. May interact with IF1 in the 30S initiation complex.

With S4 and S5 plays an important role in translational accuracy. Its function is as follows. Interacts with and stabilizes bases of the 16S rRNA that are involved in tRNA selection in the A site and with the mRNA backbone. Located at the interface of the 30S and 50S subunits, it traverses the body of the 30S subunit contacting proteins on the other side and probably holding the rRNA structure together. The combined cluster of proteins S8, S12 and S17 appears to hold together the shoulder and platform of the 30S subunit. The sequence is that of Small ribosomal subunit protein uS12 from Renibacterium salmoninarum (strain ATCC 33209 / DSM 20767 / JCM 11484 / NBRC 15589 / NCIMB 2235).